The following is a 503-amino-acid chain: Cytochrome P450 monooxygenase lnbC (503 aa).

The helical transmembrane segment at 14–34 (VVLLLSSVWIAVHLVLAAYNV) threads the bilayer. N-linked (GlcNAc...) asparagine glycosylation is found at N94 and N169. C446 contributes to the heme binding site.

The protein belongs to the cytochrome P450 family. Heme is required as a cofactor.

The protein resides in the membrane. It functions in the pathway secondary metabolite biosynthesis. Functionally, cytochrome P450 monooxygenase; part of the lnb gene cluster that mediates the biosynthesis of diastereomeric piperazines. Lna and lnb clusters encode sets of enzymes that produce overlapping sets of previously undescribed metabolites such as piperazinomycin-like metabolites or morpholine. The lna and lnb biosynthetic pathways appear to be part of a signaling network that controls the formation of sclerotia, a resilient overwintering structure. One primary function of the non-canonical nonribosomal peptide synthetases lnaA and lnbA consists in the reduction of L-tyrosine. The presence in the clusters of tailoring enzymes such as the oxidoreductases lnaB, lnbB, lnaE or lnbE, as well as of the cytochrome P450 monooxygenases lnaC, lnaD, or lnbC, might explain formation of various diastereomeric piperazines. This is Cytochrome P450 monooxygenase lnbC from Aspergillus flavus (strain ATCC 200026 / FGSC A1120 / IAM 13836 / NRRL 3357 / JCM 12722 / SRRC 167).